The following is a 391-amino-acid chain: UPF0229 protein CLH_2838 (391 aa).

Disordered regions lie at residues 1–23 and 75–107; these read MAIF…DKRR and VATG…GNEE. Over residues 80 to 92 the composition is skewed to basic and acidic residues; it reads GEEKRGDKIESGS.

This sequence belongs to the UPF0229 family.

The polypeptide is UPF0229 protein CLH_2838 (Clostridium botulinum (strain Alaska E43 / Type E3)).